The primary structure comprises 454 residues: MTFLDRTMSFWAVSRGLTPPSKVVPMLNPNQRQFLEDEVRYREKLKLMARGDAMEEVYVRKQETVDDPLELDKHDSFYQTTKSLLVLFQIMGVMPIHRNPPEKNLPRTGYSWGSKQVMWAIFIYSCQTTIVVLVLRERVKKFVTSPDKRFDEAIYNVIFISLLFTNFLLPVASWRHGPQVAIFKNMWTNYQYKFFKTTGSPIVFPNLYPLTWSLCVFSWLLSIAINLSQYFLQPDFRLWYTFAYYPIIAMLNCFCSLWYINCNAFGTASRALSDALQTTIRGEKPAQKLTEYRHLWVDLSHMMQQLGRAYSNMYGMYCLVIFFTTIIATYGSISEIIDHGATYKEVGLFVIVFYCMGLLYIICNEAHYASRKVGLDFQTKLLNINLTAVDAATQKEVEMLLVAINKNPPIMNLDGYANINRELITTNISFMATYLVVLLQFKITEQRRIGQQQA.

Over 1-114 (MTFLDRTMSF…LPRTGYSWGS (114 aa)) the chain is Cytoplasmic. The chain crosses the membrane as a helical span at residues 115–135 (KQVMWAIFIYSCQTTIVVLVL). Residues 136-153 (RERVKKFVTSPDKRFDEA) are Extracellular-facing. A helical membrane pass occupies residues 154–174 (IYNVIFISLLFTNFLLPVASW). Topologically, residues 175–206 (RHGPQVAIFKNMWTNYQYKFFKTTGSPIVFPN) are cytoplasmic. A helical membrane pass occupies residues 207-227 (LYPLTWSLCVFSWLLSIAINL). The Extracellular segment spans residues 228–237 (SQYFLQPDFR). A helical transmembrane segment spans residues 238-258 (LWYTFAYYPIIAMLNCFCSLW). Topologically, residues 259–312 (YINCNAFGTASRALSDALQTTIRGEKPAQKLTEYRHLWVDLSHMMQQLGRAYSN) are cytoplasmic. A helical transmembrane segment spans residues 313 to 333 (MYGMYCLVIFFTTIIATYGSI). Topologically, residues 334-345 (SEIIDHGATYKE) are extracellular. Residues 346–366 (VGLFVIVFYCMGLLYIICNEA) traverse the membrane as a helical segment. Over 367–422 (HYASRKVGLDFQTKLLNINLTAVDAATQKEVEMLLVAINKNPPIMNLDGYANINRE) the chain is Cytoplasmic. A helical membrane pass occupies residues 423–443 (LITTNISFMATYLVVLLQFKI). At 444 to 454 (TEQRRIGQQQA) the chain is on the extracellular side.

Belongs to the insect chemoreceptor superfamily. Gustatory receptor (GR) family. Gr21a subfamily. As to quaternary structure, gr21a and Gr63a probably form a heterodimer that responds to CO(2). Expressed in the adult labellar chemosensory neurons. Carbon dioxide-responsive neurons coexpress Gr21a and Gr63a in a pair of chemosensory receptors at both larval and adult life stages. A single bilateral neuron, expressing the Gr21a receptor, is responsible for CO(2) detection in larvae.

It is found in the cell membrane. In terms of biological role, gustatory and odorant receptor which mediates acceptance or avoidance behavior, depending on its substrates. Gr21a and Gr63a together are sufficient for carbon dioxide detection and avoidance behavior. It is possible that the CO(2) receptors Gr63a and Gr21a activate the TRPC channels through Galpha49B and Plc21C. This innate olfactory avoidance behavior can be inhibited by inhibitory interactions of the odors such as 1-hexanol and 2,3-butanedione with Gr21a and Gr63a. The sequence is that of Gustatory and odorant receptor 21a (Gr21a) from Drosophila melanogaster (Fruit fly).